Reading from the N-terminus, the 442-residue chain is F-box/kelch-repeat protein OR23 (442 aa).

The region spanning 37–84 (TLIPGLSNDVGRLILSFVPYPHISRIKSTCKSWYAFLSSKTLISLRHS) is the F-box domain. Kelch repeat units lie at residues 93–139 (LSHL…NFVA), 145–200 (YVYV…AMPG), 204–257 (RIIV…LVEN), 269–328 (EFWV…KIVA), 330–377 (DCGK…ALNG), and 390–437 (LMDT…TTVM).

The sequence is that of F-box/kelch-repeat protein OR23 (OR23) from Arabidopsis thaliana (Mouse-ear cress).